The primary structure comprises 377 residues: tRNA-specific 2-thiouridylase MnmA (377 aa).

Residues 8-15 (GMSGGVDS) and Met-34 contribute to the ATP site. The segment at 94-96 (NPD) is interaction with target base in tRNA. The active-site Nucleophile is the Cys-99. Cys-99 and Cys-201 are oxidised to a cystine. Gly-123 contacts ATP. Positions 151–153 (KDQ) are interaction with tRNA. The Cysteine persulfide intermediate role is filled by Cys-201. Residues 315–316 (RY) are interaction with tRNA.

This sequence belongs to the MnmA/TRMU family.

It localises to the cytoplasm. It carries out the reaction S-sulfanyl-L-cysteinyl-[protein] + uridine(34) in tRNA + AH2 + ATP = 2-thiouridine(34) in tRNA + L-cysteinyl-[protein] + A + AMP + diphosphate + H(+). Catalyzes the 2-thiolation of uridine at the wobble position (U34) of tRNA, leading to the formation of s(2)U34. In Acinetobacter baylyi (strain ATCC 33305 / BD413 / ADP1), this protein is tRNA-specific 2-thiouridylase MnmA.